The sequence spans 279 residues: Type II iodothyronine deiodinase (279 aa).

Over 1 to 7 (MGLLSAD) the chain is Lumenal. A helical; Signal-anchor for type III membrane protein membrane pass occupies residues 8–28 (LLITLQILPVFFSNCLFLALY). Over 29–279 (DSVILLKHMV…TEDLSTDVSL (251 aa)) the chain is Cytoplasmic. The active site involves selenocysteine 132. 2 non-standard amino acids (selenocysteine) are found at residues selenocysteine 132 and selenocysteine 265.

It belongs to the iodothyronine deiodinase family. As to quaternary structure, predominantly monomer. Can form homodimers but homodimerization is not essential for enzyme activity. In terms of tissue distribution, highly expressed in liver and in various parts of the brain including telencephalon, hippocampus, cerebellum, and brain stem, and weakly expressed in thyroid, lung, and small intestine. Not detected in skeletal muscle, heart atria or ventricle, gizzard or kidney.

It is found in the endoplasmic reticulum membrane. It carries out the reaction 3,3',5-triiodo-L-thyronine + iodide + A + H(+) = L-thyroxine + AH2. It catalyses the reaction 3,3'-diiodo-L-thyronine + iodide + A + H(+) = 3,3',5'-triiodo-L-thyronine + AH2. The catalysed reaction is 3'-iodo-L-thyronine + iodide + A + H(+) = 3',5'-diiodo-L-thyronine + AH2. The enzyme catalyses 3,3'-diiodothyronamine + iodide + A + H(+) = 3,3',5'-triiodothyronamine + AH2. It carries out the reaction 3'-iodothyronamine + iodide + A + H(+) = 3',5'-diiodothyronamine + AH2. Its activity is regulated as follows. Not inhibited by N(6)-propylthiouracil. Plays a crucial role in the metabolism of thyroid hormones (TH) and has specific roles in TH activation and inactivation by deiodination. Catalyzes the deiodination of L-thyroxine (T4) to 3,5,3'-triiodothyronine (T3) and 3,3',5'-triiodothyronine (rT3) to 3,3'-diiodothyronine (3,3'-T2) via outer-ring deiodination (ORD). Catalyzes the deiodination of 3',5'-diiodothyronine (3',5'-T2) to 3'-monoiodothyronine (3'-T1) via ORD. Catalyzes the phenolic ring deiodinations of 3,3',5'-triiodothyronamine and 3',5'- diiodothyronamine. The protein is Type II iodothyronine deiodinase (DIO2) of Gallus gallus (Chicken).